We begin with the raw amino-acid sequence, 262 residues long: Hydroxyethylthiazole kinase (262 aa).

Methionine 50 serves as a coordination point for substrate. Positions 125 and 171 each coordinate ATP. Glycine 198 lines the substrate pocket.

It belongs to the Thz kinase family. Mg(2+) is required as a cofactor.

It catalyses the reaction 5-(2-hydroxyethyl)-4-methylthiazole + ATP = 4-methyl-5-(2-phosphooxyethyl)-thiazole + ADP + H(+). Its pathway is cofactor biosynthesis; thiamine diphosphate biosynthesis; 4-methyl-5-(2-phosphoethyl)-thiazole from 5-(2-hydroxyethyl)-4-methylthiazole: step 1/1. In terms of biological role, catalyzes the phosphorylation of the hydroxyl group of 4-methyl-5-beta-hydroxyethylthiazole (THZ). The chain is Hydroxyethylthiazole kinase from Escherichia coli O6:K15:H31 (strain 536 / UPEC).